Consider the following 173-residue polypeptide: Large ribosomal subunit protein uL10 (173 aa).

Belongs to the universal ribosomal protein uL10 family. In terms of assembly, part of the ribosomal stalk of the 50S ribosomal subunit. The N-terminus interacts with L11 and the large rRNA to form the base of the stalk. The C-terminus forms an elongated spine to which L12 dimers bind in a sequential fashion forming a multimeric L10(L12)X complex.

Its function is as follows. Forms part of the ribosomal stalk, playing a central role in the interaction of the ribosome with GTP-bound translation factors. In Cupriavidus metallidurans (strain ATCC 43123 / DSM 2839 / NBRC 102507 / CH34) (Ralstonia metallidurans), this protein is Large ribosomal subunit protein uL10.